Here is a 145-residue protein sequence, read N- to C-terminus: D-aminoacyl-tRNA deacylase (145 aa).

The Gly-cisPro motif, important for rejection of L-amino acids signature appears at 137 to 138 (GP).

Belongs to the DTD family. In terms of assembly, homodimer.

Its subcellular location is the cytoplasm. It carries out the reaction glycyl-tRNA(Ala) + H2O = tRNA(Ala) + glycine + H(+). It catalyses the reaction a D-aminoacyl-tRNA + H2O = a tRNA + a D-alpha-amino acid + H(+). Functionally, an aminoacyl-tRNA editing enzyme that deacylates mischarged D-aminoacyl-tRNAs. Also deacylates mischarged glycyl-tRNA(Ala), protecting cells against glycine mischarging by AlaRS. Acts via tRNA-based rather than protein-based catalysis; rejects L-amino acids rather than detecting D-amino acids in the active site. By recycling D-aminoacyl-tRNA to D-amino acids and free tRNA molecules, this enzyme counteracts the toxicity associated with the formation of D-aminoacyl-tRNA entities in vivo and helps enforce protein L-homochirality. This is D-aminoacyl-tRNA deacylase from Stutzerimonas stutzeri (strain A1501) (Pseudomonas stutzeri).